The primary structure comprises 156 residues: Cyanate hydratase (156 aa).

Residues Arg-96, Glu-99, and Ser-122 contribute to the active site.

It belongs to the cyanase family.

The catalysed reaction is cyanate + hydrogencarbonate + 3 H(+) = NH4(+) + 2 CO2. Functionally, catalyzes the reaction of cyanate with bicarbonate to produce ammonia and carbon dioxide. This chain is Cyanate hydratase, found in Pseudomonas aeruginosa (strain UCBPP-PA14).